A 246-amino-acid polypeptide reads, in one-letter code: Protein DEHYDRATION-INDUCED 19 homolog 3 (246 aa).

The tract at residues 185-230 (ERSKAPVPIPDDTSIHKDTPAQPWESRIDSSLTSEEREQKRKQATD) is disordered. Residues 218-229 (SEEREQKRKQAT) are compositionally biased toward basic and acidic residues.

The protein belongs to the Di19 family.

The polypeptide is Protein DEHYDRATION-INDUCED 19 homolog 3 (DI19-3) (Oryza sativa subsp. japonica (Rice)).